A 279-amino-acid chain; its full sequence is Acetylglutamate kinase (279 aa).

Residues 64–65 (GG), Arg-86, and Asn-177 contribute to the substrate site.

It belongs to the acetylglutamate kinase family. ArgB subfamily.

The protein resides in the cytoplasm. It catalyses the reaction N-acetyl-L-glutamate + ATP = N-acetyl-L-glutamyl 5-phosphate + ADP. Its pathway is amino-acid biosynthesis; L-arginine biosynthesis; N(2)-acetyl-L-ornithine from L-glutamate: step 2/4. Its function is as follows. Catalyzes the ATP-dependent phosphorylation of N-acetyl-L-glutamate. This Campylobacter jejuni (strain RM1221) protein is Acetylglutamate kinase.